Reading from the N-terminus, the 411-residue chain is Tetra-peptide repeat homeobox protein 1 (411 aa).

Residues 3-24 (SLREQQLQVWFKNRRAKLARER) constitute a DNA-binding region (homeobox). 4 disordered regions span residues 20–63 (LARE…SGIL), 88–246 (IPAA…ISGP), 286–340 (PILS…SPDA), and 363–411 (LEGS…LLDL). Positions 27–55 (QQQPQRVPGQRGRGARAAPLVPAASASAP) are enriched in low complexity. 2 stretches are compositionally biased toward pro residues: residues 95 to 139 (GPGP…PGPI) and 149 to 246 (FRGP…ISGP). Low complexity predominate over residues 295 to 307 (SPGSLPGLAPILG). The segment covering 319 to 335 (APIPGPGSLPAPAPLWP) has biased composition (pro residues). Composition is skewed to polar residues over residues 366-376 (SSVSTMTSQYQ) and 388-402 (GSQPQEEGGSVNENH).

Belongs to the paired homeobox family.

It is found in the nucleus. Functionally, transcription factor expressed after fertilization required for zygotic genome activation (ZGA), a critical event in early embryonic development during which the developmental control passes from maternally provided mRNAs to the expression of the zygotic genome after fertilization. Binds and activates expression of key ZGA marker genes, such as NANOGNB, ZSCAN4, DUXB, KLF5 and DPPA3. Binds to regulatory DNA sequences containing a 5'-TAATCC-3' sequence motif. This is Tetra-peptide repeat homeobox protein 1 from Homo sapiens (Human).